Reading from the N-terminus, the 207-residue chain is Nitrophorin-1 (207 aa).

The N-terminal stretch at 1–23 (MKSYTALLAVAILCLFAAVGVSG) is a signal peptide. Intrachain disulfides connect C25-C145 and C64-C194. H82 contacts heme.

It belongs to the calycin superfamily. Nitrophorin family. Salivary gland (at protein level).

Its subcellular location is the secreted. In terms of biological role, heme-based protein that deliver nitric oxide gas (NO) to the victim while feeding, resulting in vasodilation and inhibition of platelet aggregation. Reversibly binds nitric oxide (NO). Also binds tightly to histamine, which is released by the host to induce wound healing. The chain is Nitrophorin-1 from Rhodnius prolixus (Triatomid bug).